The following is a 1063-amino-acid chain: Presequence protease, mitochondrial (1063 aa).

A mitochondrion-targeting transit peptide spans 1–33 (MLRLANRVSRKDSGNLGIAQLKKRLLATSGVSQ). His105 contributes to the Zn(2+) binding site. Glu108 functions as the Proton acceptor in the catalytic mechanism. Residue His109 participates in Zn(2+) binding. The active site involves Glu181. Glu206 provides a ligand contact to Zn(2+).

Belongs to the peptidase M16 family. PreP subfamily. Monomer and homodimer; homodimerization is induced by binding of the substrate. Requires Zn(2+) as cofactor.

The protein localises to the mitochondrion intermembrane space. It localises to the mitochondrion matrix. In terms of biological role, degrades mitochondrial transit peptides after their cleavage in the intermembrane space or in the matrix, and presequence peptides; clearance of these peptides is required to keep the presequence processing machinery running. Preferentially cleaves the N-terminal side of paired basic amino acid residues. Also degrades other unstructured peptides. May function as an ATP-dependent peptidase as opposed to a metalloendopeptidase. The sequence is that of Presequence protease, mitochondrial (CYM1) from Debaryomyces hansenii (strain ATCC 36239 / CBS 767 / BCRC 21394 / JCM 1990 / NBRC 0083 / IGC 2968) (Yeast).